A 323-amino-acid polypeptide reads, in one-letter code: Small ribosomal subunit protein uS3 (323 aa).

One can recognise a KH type-2 domain in the interval 17-86; it reads IDEFFADELG…DPQIDVQEVD (70 aa). The segment at 251-303 is disordered; the sequence is ADPGVSSEDEEVVTEPVDIGGDDEDVEDIEVVSDDSGNDTETVAEEVEELDAE. The segment covering 270 to 303 has biased composition (acidic residues); it reads GGDDEDVEDIEVVSDDSGNDTETVAEEVEELDAE.

Belongs to the universal ribosomal protein uS3 family. In terms of assembly, part of the 30S ribosomal subunit.

Its function is as follows. Binds the lower part of the 30S subunit head. The polypeptide is Small ribosomal subunit protein uS3 (Haloquadratum walsbyi (strain DSM 16790 / HBSQ001)).